The sequence spans 447 residues: Trigger factor (447 aa).

Residues 164–249 (GDLVVIDFIG…VKEVKQAVVP (86 aa)) enclose the PPIase FKBP-type domain.

The protein belongs to the FKBP-type PPIase family. Tig subfamily.

It localises to the cytoplasm. The catalysed reaction is [protein]-peptidylproline (omega=180) = [protein]-peptidylproline (omega=0). Involved in protein export. Acts as a chaperone by maintaining the newly synthesized protein in an open conformation. Functions as a peptidyl-prolyl cis-trans isomerase. This chain is Trigger factor, found in Rhodospirillum rubrum (strain ATCC 11170 / ATH 1.1.1 / DSM 467 / LMG 4362 / NCIMB 8255 / S1).